The sequence spans 171 residues: Inosine/xanthosine triphosphatase (171 aa).

Substrate is bound at residue 8–13 (TTNPAK). Residue glutamate 38 coordinates Mg(2+).

It belongs to the YjjX NTPase family. In terms of assembly, homodimer. It depends on Mg(2+) as a cofactor. Requires Mn(2+) as cofactor.

It carries out the reaction XTP + H2O = XDP + phosphate + H(+). The catalysed reaction is ITP + H2O = IDP + phosphate + H(+). Functionally, phosphatase that hydrolyzes non-canonical purine nucleotides such as XTP and ITP to their respective diphosphate derivatives. Probably excludes non-canonical purines from DNA/RNA precursor pool, thus preventing their incorporation into DNA/RNA and avoiding chromosomal lesions. The polypeptide is Inosine/xanthosine triphosphatase (Klebsiella pneumoniae (strain 342)).